Consider the following 187-residue polypeptide: MLQVTPSQISGIIESGGVVAYPTEAVYGLGCDPDNDTAIQKLLAVKQRPWEKGLILIASSFDQLKPYIDLSRVTEAQLQAAFDKWPGPFTFVIPAKADVSPMLRGCFDTIAVRVSAHQDVRAMCYACQKPLVSTSANLAGEQPALTLAEVQTQLGDKIDAVVLGALGQSCQPSTIIDIQTGHIFRQG.

Residues 3 to 187 (QVTPSQISGI…IQTGHIFRQG (185 aa)) form the YrdC-like domain.

Belongs to the SUA5 family. TsaC subfamily.

The protein localises to the cytoplasm. The catalysed reaction is L-threonine + hydrogencarbonate + ATP = L-threonylcarbamoyladenylate + diphosphate + H2O. Required for the formation of a threonylcarbamoyl group on adenosine at position 37 (t(6)A37) in tRNAs that read codons beginning with adenine. Catalyzes the conversion of L-threonine, HCO(3)(-)/CO(2) and ATP to give threonylcarbamoyl-AMP (TC-AMP) as the acyladenylate intermediate, with the release of diphosphate. The protein is Threonylcarbamoyl-AMP synthase of Shewanella amazonensis (strain ATCC BAA-1098 / SB2B).